We begin with the raw amino-acid sequence, 208 residues long: Small ribosomal subunit protein eS8 (208 aa).

A disordered region spans residues 1-27 (MGISRDNWHKRRKTGGKRKPYHKKRKY). Residue Gly-2 is the site of N-myristoyl glycine attachment. Residues 8–26 (WHKRRKTGGKRKPYHKKRK) show a composition bias toward basic residues. Lys-37 and Lys-128 each carry N6-acetyllysine. The residue at position 130 (Thr-130) is a Phosphothreonine. Ser-160 carries the post-translational modification Phosphoserine. Glycyl lysine isopeptide (Lys-Gly) (interchain with G-Cter in SUMO2) cross-links involve residues Lys-170 and Lys-193.

Belongs to the eukaryotic ribosomal protein eS8 family. As to quaternary structure, component of the small ribosomal subunit. Identified in a IGF2BP1-dependent mRNP granule complex containing untranslated mRNAs. Part of the small subunit (SSU) processome, composed of more than 70 proteins and the RNA chaperone small nucleolar RNA (snoRNA) U3.

Its subcellular location is the cytoplasm. It localises to the membrane. The protein resides in the nucleus. The protein localises to the nucleolus. In terms of biological role, component of the small ribosomal subunit. The ribosome is a large ribonucleoprotein complex responsible for the synthesis of proteins in the cell. Part of the small subunit (SSU) processome, first precursor of the small eukaryotic ribosomal subunit. During the assembly of the SSU processome in the nucleolus, many ribosome biogenesis factors, an RNA chaperone and ribosomal proteins associate with the nascent pre-rRNA and work in concert to generate RNA folding, modifications, rearrangements and cleavage as well as targeted degradation of pre-ribosomal RNA by the RNA exosome. In Oryctolagus cuniculus (Rabbit), this protein is Small ribosomal subunit protein eS8 (RPS8).